The following is a 79-amino-acid chain: Acyl carrier protein (79 aa).

Residues 2-77 (ENIEQRVKKI…QAIDYVNAHL (76 aa)) form the Carrier domain. S37 carries the post-translational modification O-(pantetheine 4'-phosphoryl)serine.

This sequence belongs to the acyl carrier protein (ACP) family. Post-translationally, 4'-phosphopantetheine is transferred from CoA to a specific serine of apo-ACP by AcpS. This modification is essential for activity because fatty acids are bound in thioester linkage to the sulfhydryl of the prosthetic group.

It is found in the cytoplasm. Its pathway is lipid metabolism; fatty acid biosynthesis. Functionally, carrier of the growing fatty acid chain in fatty acid biosynthesis. This Azoarcus sp. (strain BH72) protein is Acyl carrier protein.